The chain runs to 348 residues: Holliday junction branch migration complex subunit RuvB (348 aa).

The segment at 1–183 (MAPQPRRLIA…FGIPIRLEYY (183 aa)) is large ATPase domain (RuvB-L). ATP is bound by residues L22, R23, G64, K67, T68, T69, 130-132 (EDF), R173, Y183, and R220. Mg(2+) is bound at residue T68. Residues 184-254 (TVEELECIVR…VADRALRLLD (71 aa)) are small ATPAse domain (RuvB-S). The head domain (RuvB-H) stretch occupies residues 257 to 348 (HIGLDQMDRR…FQLFSEGGEE (92 aa)). The DNA site is built by R293, R312, and R317.

This sequence belongs to the RuvB family. Homohexamer. Forms an RuvA(8)-RuvB(12)-Holliday junction (HJ) complex. HJ DNA is sandwiched between 2 RuvA tetramers; dsDNA enters through RuvA and exits via RuvB. An RuvB hexamer assembles on each DNA strand where it exits the tetramer. Each RuvB hexamer is contacted by two RuvA subunits (via domain III) on 2 adjacent RuvB subunits; this complex drives branch migration. In the full resolvosome a probable DNA-RuvA(4)-RuvB(12)-RuvC(2) complex forms which resolves the HJ.

It is found in the cytoplasm. The catalysed reaction is ATP + H2O = ADP + phosphate + H(+). Functionally, the RuvA-RuvB-RuvC complex processes Holliday junction (HJ) DNA during genetic recombination and DNA repair, while the RuvA-RuvB complex plays an important role in the rescue of blocked DNA replication forks via replication fork reversal (RFR). RuvA specifically binds to HJ cruciform DNA, conferring on it an open structure. The RuvB hexamer acts as an ATP-dependent pump, pulling dsDNA into and through the RuvAB complex. RuvB forms 2 homohexamers on either side of HJ DNA bound by 1 or 2 RuvA tetramers; 4 subunits per hexamer contact DNA at a time. Coordinated motions by a converter formed by DNA-disengaged RuvB subunits stimulates ATP hydrolysis and nucleotide exchange. Immobilization of the converter enables RuvB to convert the ATP-contained energy into a lever motion, pulling 2 nucleotides of DNA out of the RuvA tetramer per ATP hydrolyzed, thus driving DNA branch migration. The RuvB motors rotate together with the DNA substrate, which together with the progressing nucleotide cycle form the mechanistic basis for DNA recombination by continuous HJ branch migration. Branch migration allows RuvC to scan DNA until it finds its consensus sequence, where it cleaves and resolves cruciform DNA. The chain is Holliday junction branch migration complex subunit RuvB from Methylocella silvestris (strain DSM 15510 / CIP 108128 / LMG 27833 / NCIMB 13906 / BL2).